The primary structure comprises 420 residues: Glucose-1-phosphate adenylyltransferase (420 aa).

Alpha-D-glucose 1-phosphate contacts are provided by residues Y107, G172, 187 to 188 (EK), and S205.

It belongs to the bacterial/plant glucose-1-phosphate adenylyltransferase family. As to quaternary structure, homotetramer.

The enzyme catalyses alpha-D-glucose 1-phosphate + ATP + H(+) = ADP-alpha-D-glucose + diphosphate. The protein operates within glycan biosynthesis; glycogen biosynthesis. Involved in the biosynthesis of ADP-glucose, a building block required for the elongation reactions to produce glycogen. Catalyzes the reaction between ATP and alpha-D-glucose 1-phosphate (G1P) to produce pyrophosphate and ADP-Glc. In Rhizobium johnstonii (strain DSM 114642 / LMG 32736 / 3841) (Rhizobium leguminosarum bv. viciae), this protein is Glucose-1-phosphate adenylyltransferase.